We begin with the raw amino-acid sequence, 405 residues long: LanC-like protein GCL2 (405 aa).

Residues cysteine 278, cysteine 323, and histidine 324 each coordinate Zn(2+).

It belongs to the LanC-like protein family.

Functionally, may play a role in signaling. May be not involved in abscisic acid (ABA) signaling. This Arabidopsis thaliana (Mouse-ear cress) protein is LanC-like protein GCL2 (GCL2).